The primary structure comprises 315 residues: 4-diphosphocytidyl-2-C-methyl-D-erythritol kinase (315 aa).

The active site involves lysine 8. 93–103 (PVAAGLAGGSS) provides a ligand contact to ATP. Residue aspartate 135 is part of the active site.

This sequence belongs to the GHMP kinase family. IspE subfamily.

It catalyses the reaction 4-CDP-2-C-methyl-D-erythritol + ATP = 4-CDP-2-C-methyl-D-erythritol 2-phosphate + ADP + H(+). Its pathway is isoprenoid biosynthesis; isopentenyl diphosphate biosynthesis via DXP pathway; isopentenyl diphosphate from 1-deoxy-D-xylulose 5-phosphate: step 3/6. Catalyzes the phosphorylation of the position 2 hydroxy group of 4-diphosphocytidyl-2C-methyl-D-erythritol. The polypeptide is 4-diphosphocytidyl-2-C-methyl-D-erythritol kinase (Heliobacterium modesticaldum (strain ATCC 51547 / Ice1)).